A 964-amino-acid chain; its full sequence is Syndetin (964 aa).

N-acetylmethionine is present on Met-1. The tract at residues 1–25 is disordered; it reads MQKIKSLMTRQGLKSPPESLNDLGA. At Ser-15 the chain carries Phosphoserine. Coiled coils occupy residues 81–107 and 216–244; these read LNLQ…VADL and YSCI…LSKI. Phosphoserine is present on residues Ser-494, Ser-498, Ser-559, and Ser-561. The tract at residues 532-563 is disordered; it reads DEETEDVLASNGYESDEQEKSAYQDYDSDSDV. Lys-963 is covalently cross-linked (Glycyl lysine isopeptide (Lys-Gly) (interchain with G-Cter in SUMO1); alternate). Residue Lys-963 forms a Glycyl lysine isopeptide (Lys-Gly) (interchain with G-Cter in SUMO2); alternate linkage.

The protein belongs to the syndetin family. As to quaternary structure, component of the endosome-associated retrograde protein (EARP) complex, composed of VPS51, VPS52, VPS53 and VPS50/Syndetin. The EARP complex interacts with EIPR1. Interacts with VPS51 and VPS53 in an EIPR1-independent manner.

It localises to the recycling endosome. It is found in the membrane. In terms of biological role, acts as a component of the EARP complex that is involved in endocytic recycling. The EARP complex associates with Rab4-positive endosomes and promotes recycling of internalized transferrin receptor (TFRC) to the plasma membrane. Within the EARP complex, required to tether the complex to recycling endosomes. Not involved in retrograde transport from early and late endosomes to the trans-Golgi network (TGN). This chain is Syndetin, found in Mus musculus (Mouse).